Consider the following 369-residue polypeptide: uncharacterized protein (369 aa).

The protein to A.pernix APE1276 and APE1804.

This is an uncharacterized protein from Saccharolobus solfataricus (strain ATCC 35092 / DSM 1617 / JCM 11322 / P2) (Sulfolobus solfataricus).